Consider the following 610-residue polypeptide: Myosin light chain kinase 2, skeletal/cardiac muscle (610 aa).

2 disordered regions span residues 1–168 and 196–240; these read MATE…HSPS and VSET…DTSQ. Ala-2 is modified (N-acetylalanine). Composition is skewed to basic and acidic residues over residues 32 to 63 and 70 to 82; these read SEKEPSLPDTEKDLGPTNTKKDPGAPDPKKNP and KTPEAPGPEKKGD. Residues 94 to 109 are compositionally biased toward gly residues; the sequence is SGEGDGGGGPAEGGTG. Residues 141–157 are compositionally biased toward basic and acidic residues; that stretch reads GEAKAGKKAAECREAGR. Residues Ser-160, Ser-166, and Ser-168 each carry the phosphoserine modification. The Protein kinase domain maps to 299-554; the sequence is MNSKEALGGG…AEQCLAHPWL (256 aa). ATP-binding positions include 305–313 and Lys-328; that span reads LGGGKFGAV. Catalysis depends on Asp-420, which acts as the Proton acceptor. Residue Thr-459 is modified to Phosphothreonine. The interval 588 to 600 is calmodulin-binding; the sequence is IAVSAANRFKKIS.

It belongs to the protein kinase superfamily. CAMK Ser/Thr protein kinase family. As to quaternary structure, may interact with centrin.

It is found in the cytoplasm. The enzyme catalyses L-seryl-[myosin light chain] + ATP = O-phospho-L-seryl-[myosin light chain] + ADP + H(+). The catalysed reaction is L-threonyl-[myosin light chain] + ATP = O-phospho-L-threonyl-[myosin light chain] + ADP + H(+). Its function is as follows. Implicated in the level of global muscle contraction and cardiac function. Phosphorylates a specific serine in the N-terminus of a myosin light chain. The protein is Myosin light chain kinase 2, skeletal/cardiac muscle (Mylk2) of Rattus norvegicus (Rat).